The sequence spans 149 residues: FAD synthase (149 aa).

ATP-binding positions include 9–10 (TF), 14–17 (HPGH), N92, and Y119.

It belongs to the archaeal FAD synthase family. Homodimer. A divalent metal cation serves as cofactor.

It carries out the reaction FMN + ATP + H(+) = FAD + diphosphate. It participates in cofactor biosynthesis; FAD biosynthesis; FAD from FMN: step 1/1. In terms of biological role, catalyzes the transfer of the AMP portion of ATP to flavin mononucleotide (FMN) to produce flavin adenine dinucleotide (FAD) coenzyme. The protein is FAD synthase of Methanoculleus marisnigri (strain ATCC 35101 / DSM 1498 / JR1).